The chain runs to 282 residues: Large ribosomal subunit protein uL2 (282 aa).

The interval 223-282 (TVRGSVMNPNDHPHGGGEGRAPIGRKSPVTPWGKKALGVKTRNTKKTSEKLIVRKRSNKK) is disordered.

This sequence belongs to the universal ribosomal protein uL2 family. As to quaternary structure, part of the 50S ribosomal subunit. Forms a bridge to the 30S subunit in the 70S ribosome.

Functionally, one of the primary rRNA binding proteins. Required for association of the 30S and 50S subunits to form the 70S ribosome, for tRNA binding and peptide bond formation. It has been suggested to have peptidyltransferase activity; this is somewhat controversial. Makes several contacts with the 16S rRNA in the 70S ribosome. This chain is Large ribosomal subunit protein uL2, found in Mycoplasma mycoides subsp. mycoides SC (strain CCUG 32753 / NCTC 10114 / PG1).